The sequence spans 267 residues: Soluble interferon gamma receptor OPG193 (267 aa).

The first 17 residues, 1-17, serve as a signal peptide directing secretion; that stretch reads MRYIIILAVLFINSIHA. N-linked (GlcNAc...) asparagine; by host glycans are attached at residues Asn42 and Asn150.

It belongs to the type II cytokine receptor family. As to quaternary structure, homodimer. Interacts with host IFNG.

It localises to the secreted. In terms of biological role, counteracts the antiviral effects of host IFN-gamma. Acts as a soluble IFN-gamma receptor and thus inhibits the interaction between host IFN-gamma and its receptor. The sequence is that of Soluble interferon gamma receptor OPG193 (OPG193) from Cynomys gunnisoni (Gunnison's prairie dog).